We begin with the raw amino-acid sequence, 161 residues long: Cytidylate kinase (161 aa).

Position 7–15 (7–15) interacts with ATP; it reads GLAGTGTTT.

It belongs to the cytidylate kinase family. Type 2 subfamily.

The protein localises to the cytoplasm. It catalyses the reaction CMP + ATP = CDP + ADP. The catalysed reaction is dCMP + ATP = dCDP + ADP. The chain is Cytidylate kinase (cmk) from Methanothermobacter thermautotrophicus (strain ATCC 29096 / DSM 1053 / JCM 10044 / NBRC 100330 / Delta H) (Methanobacterium thermoautotrophicum).